A 148-amino-acid polypeptide reads, in one-letter code: Nucleoside diphosphate kinase (148 aa).

Positions 9, 57, 85, 91, 102, and 112 each coordinate ATP. A Phosphothreonine modification is found at threonine 91. The Pros-phosphohistidine intermediate role is filled by histidine 115. Serine 122 carries the post-translational modification Phosphoserine.

This sequence belongs to the NDK family. Homotetramer. The cofactor is Mg(2+).

The protein resides in the cytoplasm. It carries out the reaction a 2'-deoxyribonucleoside 5'-diphosphate + ATP = a 2'-deoxyribonucleoside 5'-triphosphate + ADP. It catalyses the reaction a ribonucleoside 5'-diphosphate + ATP = a ribonucleoside 5'-triphosphate + ADP. Its function is as follows. Major role in the synthesis of nucleoside triphosphates other than ATP. The ATP gamma phosphate is transferred to the NDP beta phosphate via a ping-pong mechanism, using a phosphorylated active-site intermediate. The sequence is that of Nucleoside diphosphate kinase from Bacillus cereus (strain ATCC 14579 / DSM 31 / CCUG 7414 / JCM 2152 / NBRC 15305 / NCIMB 9373 / NCTC 2599 / NRRL B-3711).